An 874-amino-acid polypeptide reads, in one-letter code: Alanine--tRNA ligase (874 aa).

Zn(2+) is bound by residues His562, His566, Cys665, and His669.

It belongs to the class-II aminoacyl-tRNA synthetase family. Zn(2+) is required as a cofactor.

The protein localises to the cytoplasm. It catalyses the reaction tRNA(Ala) + L-alanine + ATP = L-alanyl-tRNA(Ala) + AMP + diphosphate. Functionally, catalyzes the attachment of alanine to tRNA(Ala) in a two-step reaction: alanine is first activated by ATP to form Ala-AMP and then transferred to the acceptor end of tRNA(Ala). Also edits incorrectly charged Ser-tRNA(Ala) and Gly-tRNA(Ala) via its editing domain. The protein is Alanine--tRNA ligase of Pseudomonas savastanoi pv. phaseolicola (strain 1448A / Race 6) (Pseudomonas syringae pv. phaseolicola (strain 1448A / Race 6)).